Consider the following 813-residue polypeptide: Immunoglobulin superfamily DCC subclass member 3 (813 aa).

Positions 1 to 21 (MAEPRTASPRRLPALRRPGFL) are disordered. Residues 1 to 47 (MAEPRTASPRRLPALRRPGFLPPLLPPPPPPLLLLLLLLPLPAPSLG) form the signal peptide. The span at 9-19 (PRRLPALRRPG) shows a compositional bias: low complexity. Ig-like C2-type domains follow at residues 49 to 151 (GHSA…ATMS), 151 to 232 (SDFH…VRVS), 250 to 333 (PTIL…RTAQ), and 341 to 428 (PAEF…ARLT). Cystine bridges form between cysteine 75–cysteine 129 and cysteine 172–cysteine 221. The N-linked (GlcNAc...) asparagine glycan is linked to asparagine 105. Asparagine 258 is a glycosylation site (N-linked (GlcNAc...) asparagine). 2 disulfides stabilise this stretch: cysteine 271–cysteine 319 and cysteine 363–cysteine 412. Residues asparagine 393 and asparagine 394 are each glycosylated (N-linked (GlcNAc...) asparagine). 2 Fibronectin type-III domains span residues 438–532 (PPRN…TLGE) and 535–630 (VPPP…ASER). 3 N-linked (GlcNAc...) asparagine glycosylation sites follow: asparagine 592, asparagine 616, and asparagine 646. The chain crosses the membrane as a helical span at residues 653–673 (IVIGIHIGVTCIIFCVLFLLF). 2 disordered regions span residues 689-724 (LSPP…EKPV) and 775-813 (TTEA…AAPQ).

This sequence belongs to the immunoglobulin superfamily. DCC family. As to expression, detected in cerebellum, kidney, heart, lung, skeletal muscle and spleen.

Its subcellular location is the membrane. This is Immunoglobulin superfamily DCC subclass member 3 (Igdcc3) from Mus musculus (Mouse).